The chain runs to 175 residues: Catabolic 3-dehydroquinase (175 aa).

Tyr26 serves as the catalytic Proton acceptor. Substrate is bound by residues Asn104, His110, and Asp117. His130 functions as the Proton donor in the catalytic mechanism. Substrate is bound by residues 131–132 (VS) and Arg141.

Belongs to the type-II 3-dehydroquinase family. In terms of assembly, homododecamer. Adopts a ring-like structure, composed of an arrangement of two hexameric rings stacked on top of one another.

The catalysed reaction is 3-dehydroquinate = 3-dehydroshikimate + H2O. The protein operates within aromatic compound metabolism; 3,4-dihydroxybenzoate biosynthesis; 3,4-dihydroxybenzoate from 3-dehydroquinate: step 1/2. Its function is as follows. Is involved in the catabolism of quinate. Allows the utilization of quinate as carbon source via the beta-ketoadipate pathway. This is Catabolic 3-dehydroquinase from Sordaria macrospora (strain ATCC MYA-333 / DSM 997 / K(L3346) / K-hell).